The primary structure comprises 255 residues: Ornithine decarboxylase antizyme (255 aa).

The protein belongs to the ODC antizyme family. As to quaternary structure, interacts with ODC and thereby sterically blocks ODC homodimerization.

In terms of biological role, ornithine decarboxylase (ODC) antizyme protein that negatively regulates ODC activity and intracellular polyamine biosynthesis in response to increased intracellular polyamine levels. Binds to ODC monomers, inhibiting the assembly of the functional ODC homodimer, and targets the monomers for ubiquitin-independent proteolytic destruction by the 26S proteasome. The chain is Ornithine decarboxylase antizyme (OAZ1) from Eremothecium gossypii (strain ATCC 10895 / CBS 109.51 / FGSC 9923 / NRRL Y-1056) (Yeast).